The following is a 97-amino-acid chain: YcgL domain-containing protein Pmen_1774 (97 aa).

The 85-residue stretch at 3-87 (RICSIYKSPR…PEEDYIQHLP (85 aa)) folds into the YcgL domain.

This is YcgL domain-containing protein Pmen_1774 from Ectopseudomonas mendocina (strain ymp) (Pseudomonas mendocina).